The chain runs to 319 residues: Transcription elongation factor A protein 1 (319 aa).

In terms of domain architecture, TFIIS N-terminal spans 1 to 78 (MQEIIKCREQ…DKWKQDIEGT (78 aa)). Positions 78-106 (TSATTTSSSSSSSSSTTSTTTTKTASPSE) are enriched in low complexity. The segment at 78-146 (TSATTTSSSS…TTPKTSSPPI (69 aa)) is disordered. Positions 107-122 (SLKRKSISEDTSDRPT) are enriched in basic and acidic residues. A compositionally biased stretch (low complexity) spans 133–146 (ISPPTTPKTSSPPI). Residues 160 to 272 (LRNKTIQLFV…ASMLGQNNEA (113 aa)) enclose the TFIIS central domain. The TFIIS-type zinc-finger motif lies at 275–317 (DQFQCGKCKQRKCTYTQLQTRSADEPPTTFVKCCVKGCGNRWR). Residues cysteine 279, cysteine 282, cysteine 307, and cysteine 312 each coordinate Zn(2+).

This sequence belongs to the TFS-II family.

The protein resides in the nucleus. Its function is as follows. Necessary for efficient RNA polymerase II transcription elongation past template-encoded arresting sites. The arresting sites in DNA have the property of trapping a certain fraction of elongating RNA polymerases that pass through, resulting in locked ternary complexes. Cleavage of the nascent transcript by S-II allows the resumption of elongation from the new 3'-terminus. The sequence is that of Transcription elongation factor A protein 1 (tcea1) from Dictyostelium discoideum (Social amoeba).